Consider the following 1001-residue polypeptide: Copper-transporting ATPase RAN1 (1001 aa).

Residues 1–21 (MAPSRRDLQLTPVTGGSSSQI) form a disordered region. Residues 1–298 (MAPSRRDLQL…TGEASNMFRR (298 aa)) lie on the Cytoplasmic side of the membrane. Positions 11–21 (TPVTGGSSSQI) are enriched in polar residues. HMA domains follow at residues 56-122 (RKIQ…FEAE) and 133-199 (LVGQ…FEGS). The Cu(+) site is built by C67, C70, C144, and C147. Positions 207–273 (DKLVLRVDGI…GIEEDGFGKF (67 aa)) constitute an HMA 3; degenerate domain. Residues 299-320 (FISSLVLSIPLFFIQVICPHIA) form a helical membrane-spanning segment. Over 321 to 338 (LFDALLVWRCGPFMMGDW) the chain is Extracellular. The chain crosses the membrane as a helical span at residues 339-358 (LKWALVSVIQFVIGKRFYVA). The Cytoplasmic portion of the chain corresponds to 359 to 365 (AWRALRN). The helical transmembrane segment at 366-386 (GSTNMDVLVALGTSASYFYSV) threads the bilayer. Topologically, residues 387–403 (GALLYGAVTGFWSPTYF) are extracellular. A helical membrane pass occupies residues 404-424 (DASAMLITFVLLGKYLESLAK). Over 425-558 (GKTSDAMKKL…KAPIQKFADY (134 aa)) the chain is Cytoplasmic. The chain crosses the membrane as a helical span at residues 559–581 (VASIFVPVVITLALFTLVGWSIG). Topologically, residues 582-602 (GAVGAYPDEWLPENGTHFVFS) are extracellular. The chain crosses the membrane as a helical span at residues 603–620 (LMFSISVVVIACPCALGL). Residues 621-931 (ATPTAVMVAT…DLSRKTLTRI (311 aa)) are Cytoplasmic-facing. The 4-aspartylphosphate intermediate role is filled by D658. Mg(2+) is bound by residues D877 and D881. A helical transmembrane segment spans residues 932-951 (RLNYVFAMAYNVVSIPIAAG). Residues 952–963 (VFFPVLRVQLPP) are Extracellular-facing. Residues 964–982 (WAAGACMALSSVSVVCSSL) form a helical membrane-spanning segment. Residues 983–1001 (LLRRYKKPRLTTVLKITTE) are Cytoplasmic-facing.

The protein belongs to the cation transport ATPase (P-type) (TC 3.A.3) family. Type IB subfamily.

The protein localises to the membrane. It carries out the reaction Cu(+)(in) + ATP + H2O = Cu(+)(out) + ADP + phosphate + H(+). Functionally, involved in copper import into the cell. Essential for ethylene signaling, which requires copper. Acts by delivering copper to create functional hormone receptors. In Arabidopsis thaliana (Mouse-ear cress), this protein is Copper-transporting ATPase RAN1 (RAN1).